Here is a 130-residue protein sequence, read N- to C-terminus: uncharacterized protein (130 aa).

The interval 1–100 (MSSNSDNTEC…AEPDAAKEEP (100 aa)) is disordered. Basic and acidic residues-rich tracts occupy residues 57 to 75 (YTTRSKYESDVSEFKKMMD) and 91 to 100 (AEPDAAKEEP).

This is an uncharacterized protein from Equine herpesvirus 1 (strain Ab4p) (EHV-1).